A 198-amino-acid chain; its full sequence is Thioredoxin reductase-like selenoprotein T homolog CG3887 (198 aa).

The signal sequence occupies residues 1 to 25; it reads MERLTGRNVALLVLCLCAGYALVFA. Cysteine 49 and cysteine 52 form a disulfide bridge.

This sequence belongs to the SelWTH family. SELT subfamily.

The catalysed reaction is [thioredoxin]-dithiol + NADP(+) = [thioredoxin]-disulfide + NADPH + H(+). Functionally, probably has thioredoxin reductase-like oxidoreductase activity. This chain is Thioredoxin reductase-like selenoprotein T homolog CG3887, found in Drosophila melanogaster (Fruit fly).